The primary structure comprises 120 residues: Large ribosomal subunit protein uL18 (120 aa).

The protein belongs to the universal ribosomal protein uL18 family. Part of the 50S ribosomal subunit; part of the 5S rRNA/L5/L18/L25 subcomplex. Contacts the 5S and 23S rRNAs.

Functionally, this is one of the proteins that bind and probably mediate the attachment of the 5S RNA into the large ribosomal subunit, where it forms part of the central protuberance. The sequence is that of Large ribosomal subunit protein uL18 from Bacillus licheniformis (strain ATCC 14580 / DSM 13 / JCM 2505 / CCUG 7422 / NBRC 12200 / NCIMB 9375 / NCTC 10341 / NRRL NRS-1264 / Gibson 46).